The sequence spans 146 residues: Snaclec CTL-Eoc124 (146 aa).

A signal peptide spans 1–23 (MGRFISVSFGLLVVFLSLSGTGA). Intrachain disulfides connect Cys25-Cys36, Cys53-Cys142, and Cys119-Cys134. The C-type lectin domain occupies 32–143 (YQGHCYRVFN…CSRTNNVACK (112 aa)).

Belongs to the snaclec family. Heterodimer; disulfide-linked. Expressed by the venom gland.

It localises to the secreted. In terms of biological role, interferes with one step of hemostasis (modulation of platelet aggregation, or coagulation cascade, for example). The sequence is that of Snaclec CTL-Eoc124 from Echis ocellatus (Ocellated saw-scaled viper).